Reading from the N-terminus, the 548-residue chain is Tylosin resistance ATP-binding protein TlrC (548 aa).

ABC transporter domains lie at 9-265 (LSLH…RRRQ) and 347-547 (IATA…VSGA). Residues 41–48 (GDNGAGKS) and 387–394 (GPNGAGKS) each bind ATP.

The protein belongs to the ABC transporter superfamily.

The protein localises to the cell membrane. Its function is as follows. Responsible for tylosin resistance, and is proposed to be a subunit of a multicomponent export system for the energy-dependent efflux of tylosin. The sequence is that of Tylosin resistance ATP-binding protein TlrC (tlrC) from Streptomyces fradiae (Streptomyces roseoflavus).